The following is a 288-amino-acid chain: 4-diphosphocytidyl-2-C-methyl-D-erythritol kinase (288 aa).

Residue K13 is part of the active site. Residue 96-106 coordinates ATP; that stretch reads PIGGGIGGGSS. D138 is an active-site residue.

The protein belongs to the GHMP kinase family. IspE subfamily.

It carries out the reaction 4-CDP-2-C-methyl-D-erythritol + ATP = 4-CDP-2-C-methyl-D-erythritol 2-phosphate + ADP + H(+). The protein operates within isoprenoid biosynthesis; isopentenyl diphosphate biosynthesis via DXP pathway; isopentenyl diphosphate from 1-deoxy-D-xylulose 5-phosphate: step 3/6. Its function is as follows. Catalyzes the phosphorylation of the position 2 hydroxy group of 4-diphosphocytidyl-2C-methyl-D-erythritol. This chain is 4-diphosphocytidyl-2-C-methyl-D-erythritol kinase, found in Aliivibrio salmonicida (strain LFI1238) (Vibrio salmonicida (strain LFI1238)).